Consider the following 135-residue polypeptide: S-protein homolog 20 (135 aa).

An N-terminal signal peptide occupies residues 1–26 (MNGSSAFHIILSVTFMVFLFGGLCEA). An N-linked (GlcNAc...) asparagine glycan is attached at asparagine 88.

It belongs to the plant self-incompatibility (S1) protein family.

Its subcellular location is the secreted. The protein is S-protein homolog 20 of Arabidopsis thaliana (Mouse-ear cress).